A 192-amino-acid chain; its full sequence is UPF0316 protein SSP0880 (192 aa).

A run of 3 helical transmembrane segments spans residues 8–28 (PWLM…CLTM), 40–60 (VAAI…GMVM), and 66–86 (IQNV…GMKI).

This sequence belongs to the UPF0316 family.

The protein localises to the cell membrane. This chain is UPF0316 protein SSP0880, found in Staphylococcus saprophyticus subsp. saprophyticus (strain ATCC 15305 / DSM 20229 / NCIMB 8711 / NCTC 7292 / S-41).